We begin with the raw amino-acid sequence, 96 residues long: uncharacterized protein (96 aa).

Transmembrane regions (helical) follow at residues 14 to 34 (FIEGMSLLILLFIAMPLKYWA), 38 to 58 (LAVTIVGSVHGGLFILYLLVL), and 67 to 87 (WPLKWSAAGFIAAFVPFGNFL).

It is found in the cell membrane. This is an uncharacterized protein from Bacillus subtilis (strain 168).